The following is a 1236-amino-acid chain: DNA topoisomerase 2 (1236 aa).

ATP is bound by residues N65, N96, 124 to 126 (SSN), 137 to 144 (GRHGYGAK), and 354 to 356 (QSK). In terms of domain architecture, Toprim spans 434–548 (RTLIITEGDS…KLLQNNPGYI (115 aa)). Mg(2+)-binding residues include E440, D517, and D519. Residues 685–1101 (IPHCVDGLKP…TPVKMWLTEL (417 aa)) enclose the Topo IIA-type catalytic domain. The active-site O-(5'-phospho-DNA)-tyrosine intermediate is Y775. An interaction with DNA region spans residues 956-965 (ALAQRIYING). The segment at 1161 to 1211 (YEKPPPSKRRPGESVGGARPSDSAARTVGKRLVGSRSEFKNKKPMSRKNNV) is disordered.

It belongs to the type II topoisomerase family. In terms of assembly, homodimer. The cofactor is Mg(2+). It depends on Mn(2+) as a cofactor. Requires Ca(2+) as cofactor.

Its subcellular location is the nucleus. It carries out the reaction ATP-dependent breakage, passage and rejoining of double-stranded DNA.. In terms of biological role, control of topological states of DNA by transient breakage and subsequent rejoining of DNA strands. Topoisomerase II makes double-strand breaks. In Leishmania chagasi, this protein is DNA topoisomerase 2 (TOP2).